A 524-amino-acid polypeptide reads, in one-letter code: Apoptosis inhibitor 5 (524 aa).

Residues 2–360 form an ARM-like and Heat-like helical repeats region; sequence PTVEELYRNY…HQLGRKLPDF (359 aa). An N6-acetyllysine modification is found at Lys-251. A leucine-zipper region spans residues 370 to 391; it reads LKDFKIRLQYFARGLQVYIRQL. At Thr-399 the chain carries Phosphothreonine. The interval 452 to 524 is disordered; the sequence is GQKRASEDTT…RGNRSRGRLY (73 aa). A Nuclear localization signal motif is present at residues 454–475; that stretch reads KRASEDTTSGSPPKKSSAGPKR. A phosphoserine mark is found at Ser-462, Ser-464, and Ser-469. A compositionally biased stretch (low complexity) spans 462 to 472; that stretch reads SGSPPKKSSAG. The span at 487 to 497 shows a compositional bias: polar residues; sequence KYSSNLGNFNY. Arg-500 is subject to Omega-N-methylarginine.

The protein belongs to the API5 family. Monomer. Interacts with FGF2 and ACIN1. Acetylation at Lys-251 impairs antiapoptotic function. In terms of tissue distribution, expressed in all tissues tested, including heart, brain, placenta, lung, liver, skeletal muscle, kidney and pancreas. Highest levels in heart, pancreas and placenta. Highly expressed in several cancers. Preferentially expressed in squamous cell carcinoma versus adenocarcinoma in non-small cell lung cancer.

It is found in the nucleus. It localises to the cytoplasm. In terms of biological role, antiapoptotic factor that may have a role in protein assembly. Negatively regulates ACIN1. By binding to ACIN1, it suppresses ACIN1 cleavage from CASP3 and ACIN1-mediated DNA fragmentation. Also known to efficiently suppress E2F1-induced apoptosis. Its depletion enhances the cytotoxic action of the chemotherapeutic drugs. This Homo sapiens (Human) protein is Apoptosis inhibitor 5.